The following is a 159-amino-acid chain: Large ribosomal subunit protein uL15 (159 aa).

Positions 1–18 are enriched in basic and acidic residues; sequence MKLNEIRDNEGSSKDRIR. The interval 1–37 is disordered; that stretch reads MKLNEIRDNEGSSKDRIRVGRGIGSGKGKTGGRGVKG. The span at 21 to 35 shows a compositional bias: gly residues; that stretch reads RGIGSGKGKTGGRGV.

It belongs to the universal ribosomal protein uL15 family. Part of the 50S ribosomal subunit.

Binds to the 23S rRNA. This is Large ribosomal subunit protein uL15 from Agrobacterium fabrum (strain C58 / ATCC 33970) (Agrobacterium tumefaciens (strain C58)).